The following is a 423-amino-acid chain: Serine hydroxymethyltransferase (423 aa).

(6S)-5,6,7,8-tetrahydrofolate-binding positions include L120 and 124–126; that span reads GHL. An N6-(pyridoxal phosphate)lysine modification is found at K229. 353-355 lines the (6S)-5,6,7,8-tetrahydrofolate pocket; sequence SPF.

This sequence belongs to the SHMT family. In terms of assembly, homodimer. Requires pyridoxal 5'-phosphate as cofactor.

Its subcellular location is the cytoplasm. The enzyme catalyses (6R)-5,10-methylene-5,6,7,8-tetrahydrofolate + glycine + H2O = (6S)-5,6,7,8-tetrahydrofolate + L-serine. Its pathway is one-carbon metabolism; tetrahydrofolate interconversion. It participates in amino-acid biosynthesis; glycine biosynthesis; glycine from L-serine: step 1/1. Functionally, catalyzes the reversible interconversion of serine and glycine with tetrahydrofolate (THF) serving as the one-carbon carrier. This reaction serves as the major source of one-carbon groups required for the biosynthesis of purines, thymidylate, methionine, and other important biomolecules. Also exhibits THF-independent aldolase activity toward beta-hydroxyamino acids, producing glycine and aldehydes, via a retro-aldol mechanism. The sequence is that of Serine hydroxymethyltransferase from Prochlorococcus marinus (strain MIT 9301).